Here is a 713-residue protein sequence, read N- to C-terminus: Ribosomal RNA large subunit methyltransferase K/L (713 aa).

The THUMP domain occupies 43–154 (LLYRALLWSR…RDQVMLSLDL (112 aa)).

This sequence belongs to the methyltransferase superfamily. RlmKL family.

Its subcellular location is the cytoplasm. The enzyme catalyses guanosine(2445) in 23S rRNA + S-adenosyl-L-methionine = N(2)-methylguanosine(2445) in 23S rRNA + S-adenosyl-L-homocysteine + H(+). The catalysed reaction is guanosine(2069) in 23S rRNA + S-adenosyl-L-methionine = N(2)-methylguanosine(2069) in 23S rRNA + S-adenosyl-L-homocysteine + H(+). Specifically methylates the guanine in position 2445 (m2G2445) and the guanine in position 2069 (m7G2069) of 23S rRNA. In Sodalis glossinidius (strain morsitans), this protein is Ribosomal RNA large subunit methyltransferase K/L.